The primary structure comprises 172 residues: Peptide deformylase 1 (172 aa).

Residues Cys91 and His133 each contribute to the Fe cation site. The active site involves Glu134. His137 is a Fe cation binding site.

Belongs to the polypeptide deformylase family. Fe(2+) serves as cofactor.

It carries out the reaction N-terminal N-formyl-L-methionyl-[peptide] + H2O = N-terminal L-methionyl-[peptide] + formate. Functionally, removes the formyl group from the N-terminal Met of newly synthesized proteins. Requires at least a dipeptide for an efficient rate of reaction. N-terminal L-methionine is a prerequisite for activity but the enzyme has broad specificity at other positions. This chain is Peptide deformylase 1, found in Vibrio parahaemolyticus serotype O3:K6 (strain RIMD 2210633).